We begin with the raw amino-acid sequence, 341 residues long: ATPase GET3 (341 aa).

34–41 (KGGVGKTT) lines the ATP pocket. Asp-63 is a catalytic residue. ATP contacts are provided by Glu-245 and Asn-272. Residues Cys-283 and Cys-286 each coordinate Zn(2+).

Belongs to the arsA ATPase family. In terms of assembly, homodimer.

The protein localises to the cytoplasm. The protein resides in the endoplasmic reticulum. ATPase required for the post-translational delivery of tail-anchored (TA) proteins to the endoplasmic reticulum. Recognizes and selectively binds the transmembrane domain of TA proteins in the cytosol. This complex then targets to the endoplasmic reticulum by membrane-bound receptors, where the tail-anchored protein is released for insertion. This process is regulated by ATP binding and hydrolysis. ATP binding drives the homodimer towards the closed dimer state, facilitating recognition of newly synthesized TA membrane proteins. ATP hydrolysis is required for insertion. Subsequently, the homodimer reverts towards the open dimer state, lowering its affinity for the membrane-bound receptor, and returning it to the cytosol to initiate a new round of targeting. The polypeptide is ATPase GET3 (Ajellomyces dermatitidis (strain ER-3 / ATCC MYA-2586) (Blastomyces dermatitidis)).